Consider the following 236-residue polypeptide: uncharacterized protein (236 aa).

Residues 4 to 236 form the GP-PDE domain; that stretch reads QFLIAYRGYS…VKFQITAQIY (233 aa).

It to glycerophosphoryl diester phosphodiesterases (EC 3.1.4.46). To M.genitalium MG293.

This is an uncharacterized protein from Mycoplasma genitalium (strain ATCC 33530 / DSM 19775 / NCTC 10195 / G37) (Mycoplasmoides genitalium).